Here is an 815-residue protein sequence, read N- to C-terminus: MLKPHPEHKEQPQDSFTPSGDSTPDASMAEERDFMRSVLPVYDSFHPEDSSLALPLANKLTLADAHRLNRLQQQVQLTLSRKKRKPKPADSSLAESQSSCQISSSSSLGSLHLKRTFSVNHEATRSLRMVDRSQWPSMEPPLFHRGYGSFRYTPKRAGLCLGSNSLTLPSAPTTSHFQMNKLPLRYAHSEVLRNPRFAGLSAATQIPSSPVYENPHTDDTDDVFLPSTSVERGRMESEKHTLQQTLCKQREGGFVALEQSENVSWQSRVRKPSLEFVAGRRPSQTGSLISMEEQSGSLGRIEKLEVKQHAVTTLTKKGKPGELSAEMTLKEAVNLLTQDNNMETQIAAANFIQNQCFNSPDAKRKILHLQGIPKLLKLMQNDSEELQWAAVSSLRNIVFENNENKMEVKDCEGLPVILRLLKINRDIETRRQLTGLLWNLSSHDLLKEHLSREAVKPLTDSVLVPCSGISEGEDPKLELLADPDIFYNATGCLRNLSSAGPDGRKVMRDCEGLIECVIYYIRGTIADYKPDDKATENCVCILHNLSYRFDCEVPRVDSPVAQKPKQTHTETSNPGCFIIKTPKNSAENLEADEDYPALEENGSPHGVEWLWSAITVRMYLSLIAVSTNQHTKQASIGTLQNLTACSGEISQAIAHFIVQKEGGLSQVKKLLQEAEKEELRISVSLLKNISRYRELHADIVKQVLPELVAILPNSDRNVEQPIEITVTICHILINLSQASASNTCAIINQGALPKIISISSKDNGFGPTRAGQAACVLLHTLWRHSELHSSFKKAGYRKTDFINNRTVKAVNSARE.

A compositionally biased stretch (basic and acidic residues) spans 1-12 (MLKPHPEHKEQP). Disordered regions lie at residues 1-31 (MLKPHPEHKEQPQDSFTPSGDSTPDASMAEE) and 76-105 (QLTLSRKKRKPKPADSSLAESQSSCQISSS). Over residues 13–25 (QDSFTPSGDSTPD) the composition is skewed to polar residues. Residues 91–105 (SSLAESQSSCQISSS) are compositionally biased toward low complexity. 9 ARM repeats span residues 317–357 (KGKP…NQCF), 360–399 (PDAKRKILHLQGIPKLLKLMQNDSEELQWAAVSSLRNIVF), 402–442 (NENK…NLSS), 457–498 (PLTD…NLSS), 501–547 (PDGR…NLSY), 604–644 (PHGV…NLTA), 652–691 (AIAHFIVQKEGGLSQVKKLLQEAEKEELRISVSLLKNISR), 693–737 (RELH…NLSQ), and 740–783 (ASNT…TLWR).

The protein belongs to the beta-catenin family.

The protein localises to the nucleus. Its subcellular location is the cell junction. It is found in the desmosome. It localises to the cytoplasm. Required for development of the heart, potentially via cell-cell adhesion and modulation of expression of cardiac precursor genes. Plays a role in desmosome cell-cell junctions and their intracellular connectivity. The chain is Plakophilin-2 from Danio rerio (Zebrafish).